A 112-amino-acid polypeptide reads, in one-letter code: DNA-binding protein Mboo_1886 (112 aa).

The protein belongs to the PDCD5 family.

The sequence is that of DNA-binding protein Mboo_1886 from Methanoregula boonei (strain DSM 21154 / JCM 14090 / 6A8).